Reading from the N-terminus, the 139-residue chain is Hydrogenase maturation factor HypA (139 aa).

Residues Met-1 and His-2 each coordinate Ni(2+). Zn(2+)-binding residues include Cys-73 and Cys-76. Position 98 (His-98) interacts with Ni(2+). Zn(2+) is bound by residues Cys-110 and Cys-113.

The protein belongs to the HypA/HybF family. Monomer and homodimer. Could also form hexamers. Forms a complex with HypB.

Functionally, involved in the maturation of [NiFe] hydrogenases. Required for nickel insertion into the metal center of the hydrogenase. This is Hydrogenase maturation factor HypA from Thermococcus kodakarensis (strain ATCC BAA-918 / JCM 12380 / KOD1) (Pyrococcus kodakaraensis (strain KOD1)).